A 494-amino-acid polypeptide reads, in one-letter code: Rhamnulokinase (494 aa).

18–22 (ASSGR) lines the ATP pocket. Substrate-binding positions include Gly-87 and 242–244 (HDT). Catalysis depends on Asp-243, which acts as the Proton acceptor. Position 265 (Thr-265) interacts with ATP. Substrate is bound at residue Asn-302. Gln-310 serves as a coordination point for ATP. A disulfide bridge connects residues Cys-360 and Cys-377. Position 411 (Gly-411) interacts with ATP.

This sequence belongs to the rhamnulokinase family. It depends on Mg(2+) as a cofactor.

The catalysed reaction is L-rhamnulose + ATP = L-rhamnulose 1-phosphate + ADP + H(+). It functions in the pathway carbohydrate degradation; L-rhamnose degradation; glycerone phosphate from L-rhamnose: step 2/3. Functionally, involved in the catabolism of L-rhamnose (6-deoxy-L-mannose). Catalyzes the transfer of the gamma-phosphate group from ATP to the 1-hydroxyl group of L-rhamnulose to yield L-rhamnulose 1-phosphate. In Enterococcus faecalis (strain ATCC 700802 / V583), this protein is Rhamnulokinase.